Here is a 504-residue protein sequence, read N- to C-terminus: Probable alpha-L-arabinofuranosidase C (504 aa).

4 N-linked (GlcNAc...) asparagine glycosylation sites follow: Asn152, Asn181, Asn269, and Asn467.

This sequence belongs to the glycosyl hydrolase 51 family.

Its subcellular location is the secreted. It catalyses the reaction Hydrolysis of terminal non-reducing alpha-L-arabinofuranoside residues in alpha-L-arabinosides.. Its pathway is glycan metabolism; L-arabinan degradation. Functionally, alpha-L-arabinofuranosidase involved in the degradation of arabinoxylan, a major component of plant hemicellulose. Acts only on small linear 1,5-alpha-linked L-arabinofuranosyl oligosaccharides. This is Probable alpha-L-arabinofuranosidase C (abfC) from Aspergillus terreus (strain NIH 2624 / FGSC A1156).